A 533-amino-acid chain; its full sequence is uncharacterized protein (533 aa).

5 helical membrane-spanning segments follow: residues 4–23 (FLAANPLIALVVILAVGLAI), 28–47 (VFGLSLGAAAVLFVALVVST), 57–79 (IVYQLGLAMFVYVIGLSAGPAFF), 86–108 (GWKLTIFMLLLLATLIGLAWVLI), and 151–173 (VIGYSLAYPGAVLGSIVVAAVGA). Residues 263–347 (LGEERETKIE…VAEVRRFLGD (85 aa)) form the RCK C-terminal domain. The next 4 helical transmembrane spans lie at 352–374 (LADVNLLPLAIGLSLGLLLGAIP), 379–401 (GGTTMSLGFGGGPIIAGLILGAL), 422–444 (LGLALFLAGVGTSAGAGFRAALT), and 454–476 (GGLVITLASALLCAVIGMWVLRL).

The protein belongs to the AAE transporter (TC 2.A.81) family.

The protein resides in the cell membrane. This is an uncharacterized protein from Corynebacterium glutamicum (strain ATCC 13032 / DSM 20300 / JCM 1318 / BCRC 11384 / CCUG 27702 / LMG 3730 / NBRC 12168 / NCIMB 10025 / NRRL B-2784 / 534).